A 276-amino-acid chain; its full sequence is uncharacterized protein (276 aa).

The N-terminal stretch at Met1–Ala25 is a signal peptide. A lipid anchor (N-palmitoyl cysteine) is attached at Cys26. Residue Cys26 is the site of S-diacylglycerol cysteine attachment.

This sequence belongs to the MG439/MG440 family.

It localises to the cell membrane. This is an uncharacterized protein from Mycoplasma pneumoniae (strain ATCC 29342 / M129 / Subtype 1) (Mycoplasmoides pneumoniae).